Reading from the N-terminus, the 218-residue chain is Ropporin-1-like protein (218 aa).

Residues 17 to 54 form the RIIa domain; that stretch reads PALPNMLKQFTKAAIRTQPRDVLQWAADYFSALSKGQD. A disordered region spans residues 199-218; sequence QSQGGMVQPSNFTSLHTAEK.

It belongs to the ropporin family. As to quaternary structure, component of axonemal radial spoke complexes.

The protein resides in the cell projection. The protein localises to the cilium. It localises to the flagellum. Functionally, functions as part of axonemal radial spoke complexes that play an important part in the motility of sperm and cilia. Important for male fertility. Involved in fibrous sheath integrity and sperm motility, plays a role in PKA-dependent signaling processes required for spermatozoa capacitation. The polypeptide is Ropporin-1-like protein (ropn1l) (Danio rerio (Zebrafish)).